Reading from the N-terminus, the 123-residue chain is Large ribosomal subunit protein bL12 (123 aa).

It belongs to the bacterial ribosomal protein bL12 family. Homodimer. Part of the ribosomal stalk of the 50S ribosomal subunit. Forms a multimeric L10(L12)X complex, where L10 forms an elongated spine to which 2 to 4 L12 dimers bind in a sequential fashion. Binds GTP-bound translation factors.

Its function is as follows. Forms part of the ribosomal stalk which helps the ribosome interact with GTP-bound translation factors. Is thus essential for accurate translation. This chain is Large ribosomal subunit protein bL12, found in Photorhabdus laumondii subsp. laumondii (strain DSM 15139 / CIP 105565 / TT01) (Photorhabdus luminescens subsp. laumondii).